We begin with the raw amino-acid sequence, 287 residues long: Nucleotide-binding protein VIBHAR_03667 (287 aa).

An ATP-binding site is contributed by 8–15; the sequence is GHSGAGKS. Position 56 to 59 (56 to 59) interacts with GTP; the sequence is DIRN.

The protein belongs to the RapZ-like family.

Its function is as follows. Displays ATPase and GTPase activities. The polypeptide is Nucleotide-binding protein VIBHAR_03667 (Vibrio campbellii (strain ATCC BAA-1116)).